The primary structure comprises 426 residues: Potassium channel subfamily K member 2 (426 aa).

The Cytoplasmic segment spans residues 1–61; the sequence is MLPSASRERP…TTINVMKWKT (61 aa). Important for GNG4 binding and L-glutamate release in astrocytes regions lie at residues 17–38 and 51–61; these read AAPD…LSFS and DTTINVMKWKT. The chain crosses the membrane as a helical span at residues 62–82; it reads VSTIFLVVVLYLIIGATVFKA. Asn-110 and Asn-134 each carry an N-linked (GlcNAc...) asparagine glycan. Positions 144–170 form an intramembrane region, pore-forming; sequence LGSSFFFAGTVITTIGFGNISPRTEGG. K(+) contacts are provided by Thr-157, Ile-158, Gly-159, and Phe-160. A selectivity filter 1 region spans residues 157–162; the sequence is TIGFGN. A helical membrane pass occupies residues 172–192; that stretch reads IFCIIYALLGIPLFGFLLAGV. At 193–223 the chain is on the cytoplasmic side; it reads GDQLGTIFGKGIAKVEDTFIKWNVSQTKIRI. The chain crosses the membrane as a helical span at residues 224 to 244; that stretch reads ISTIIFILFGCVLFVALPAII. The segment at residues 253–283 is an intramembrane region (pore-forming); it reads ALDAIYFVVITLTTIGFGDYVAGGSDIEYLD. K(+)-binding residues include Thr-266, Ile-267, Gly-268, and Phe-269. Positions 266 to 271 are selectivity filter 2; sequence TIGFGD. Residues 288–308 form a helical membrane-spanning segment; that stretch reads VVWFWILVGLAYFAAVLSMIG. The Cytoplasmic portion of the chain corresponds to 309-426; sequence DWLRVISKKT…EEIAVIENIK (118 aa). The interaction with AKAP5 stretch occupies residues 313-326; the sequence is VISKKTKEEVGEFR. The essential for chloroform and halothane sensitivity stretch occupies residues 337–385; sequence TAEFKETRRRLSVEIYDKFQRATSIKRKLSAELAGNHNQELTPCRRTLS. Position 348 is a phosphoserine; by PKA (Ser-348).

Belongs to the two pore domain potassium channel (TC 1.A.1.8) family. As to quaternary structure, homodimer; disulfide-linked. Forms heterodimers with other 2-pore domain K(+) channel subunits, such as KCNK1, KCNK4, KCNK10 and KCNK18. Interacts with AKAP5; the channel is recruited to postsynaptic microdomains by AKAP5 where it can integrate neurotransmitter receptor signals. Part of a complex composed of AKAP5 and ADRB2. Upon AKAP5 binding, the channel is no longer sensitive to intracellular acidification, membrane stretch or arachidonic acid stimuli. Interacts with POPDC1; the interaction enhances KCNK2 surface expression and is inhibited by cAMP. Interacts (via N-terminus) with G-protein subunit GNG4 (via C-terminus); this interaction confers ion selectivity to L-glutamate and Cl(-) anions. Post-translationally, phosphorylation at Ser-348 controls the reversible conversion from a leak channel to a voltage-dependent channel. In terms of tissue distribution, detected in kidney, adrenal gland and brain where it is preferentially expressed in the amygdala but not found in thalamus, hypothalamus, hippocampus or substantia nigra.

It localises to the cell membrane. The protein resides in the endoplasmic reticulum membrane. It is found in the cell projection. Its subcellular location is the axon. The protein localises to the dendrite. It localises to the postsynaptic density membrane. The protein resides in the sarcolemma. It carries out the reaction K(+)(in) = K(+)(out). The enzyme catalyses L-glutamate(out) = L-glutamate(in). It catalyses the reaction chloride(in) = chloride(out). The catalysed reaction is Rb(+)(in) = Rb(+)(out). It carries out the reaction Cs(+)(in) = Cs(+)(out). With respect to regulation, activated by various stimuli including intracellular acidic pH, mechanical stretch and polyunsaturated fatty acids such as arachidonic acid. Activated by volatile anesthetics such as chloroform, halothane, and isoflurane. K(+) channel that conducts voltage-dependent outward rectifying currents upon membrane depolarization. Voltage sensing is coupled to K(+) electrochemical gradient in an 'ion flux gating' mode where outward but not inward ion flow opens the gate. Converts to voltage-independent 'leak' conductance mode upon stimulation by various stimuli including mechanical membrane stretch, acidic pH, heat and lipids. Reversibly converts between a voltage-insensitive K(+) 'leak' channel and a voltage-dependent outward rectifying K(+) channel in a phosphorylation-dependent manner. Homo- and heterodimerizes to form functional channels with distinct regulatory and gating properties. In trigeminal ganglia sensory neurons, the heterodimer of KCNK2/TREK-1 and KCNK18/TRESK inhibits neuronal firing and neurogenic inflammation by stabilizing the resting membrane potential at K(+) equilibrium potential as well as by regulating the threshold of action potentials and the spike frequency. At trigeminal A-beta afferent nerves, the heterodimer of KCNK2/TREK-1 and KCNK4/TRAAK is mostly coexpressed at nodes of Ranvier where it conducts voltage-independent mechanosensitive and thermosensitive currents, allowing rapid action potential repolarization, high speed and high frequence saltatory conduction on myelinated nerves to ensure prompt sensory responses. In hippocampal astrocytes, the heterodimer of KCNK2/TREK-1 and KCNK1/TWIK-1 allows passive K(+) conductance under basal conditions, but changes ion selectivity and becomes permeable to L-glutamate and Cl(-) ions upon binding to G-protein subunit GNG4 in stimulated astrocytes. Mediates rapid L-glutamate release in response to activation of G-protein-coupled receptors, such as F2R and CNR1. In hippocampal pyramidal neurons, the homodimer of KCNK2/TREK-1 contributes to gamma-aminobutyric acid (GABA) B-induced slow inhibitory postsynaptic potential. Associates with AKAP5 and Gs-protein-coupled receptor B2AR at postsynaptic dense bodies and converts to a leak channel no longer sensitive to stimulation by arachidonic acid, acidic pH or mechanical stress, nor inhibited by Gq-coupled receptors but still under the negative control of Gs-coupled receptors. Permeable to other monovalent cations such as Rb(+) and Cs(+). Its function is as follows. Does not display channel activity but reduces the channel activity of isoform 1 and isoform 2 and reduces cell surface expression of isoform 2. The sequence is that of Potassium channel subfamily K member 2 from Homo sapiens (Human).